Here is a 336-residue protein sequence, read N- to C-terminus: uncharacterized protein (336 aa).

The signal sequence occupies residues 1-33 (MGSAWPAEIRKIAKISKRLLGATVILGFGVAEA).

This is an uncharacterized protein from Sinorhizobium fredii (strain NBRC 101917 / NGR234).